We begin with the raw amino-acid sequence, 65 residues long: uncharacterized protein (65 aa).

It is found in the plastid. It localises to the chloroplast. This is an uncharacterized protein from Mesostigma viride (Green alga).